The sequence spans 226 residues: MYTLIIPAAGQGKRMGAGKNKLFLLINGVPIIVHTLRAFEKDKACKRIIMAINEEERPYFEELMQKYPVEKQVQFIQGGAERQDSVYNALQYVSGVEYVLVHDGARPFVTNKMMQDVLTAAEKYGASICAVPVKDTIKKVEQGVVVETVERSQLKAVQTPQGFSVPLLLEAHRSAKQSCFLGTDDASLVERVGKKVGVVEGSYYNIKVTTPEDLLIAESFLHVQKK.

Belongs to the IspD/TarI cytidylyltransferase family. IspD subfamily.

The enzyme catalyses 2-C-methyl-D-erythritol 4-phosphate + CTP + H(+) = 4-CDP-2-C-methyl-D-erythritol + diphosphate. It participates in isoprenoid biosynthesis; isopentenyl diphosphate biosynthesis via DXP pathway; isopentenyl diphosphate from 1-deoxy-D-xylulose 5-phosphate: step 2/6. Its function is as follows. Catalyzes the formation of 4-diphosphocytidyl-2-C-methyl-D-erythritol from CTP and 2-C-methyl-D-erythritol 4-phosphate (MEP). The sequence is that of 2-C-methyl-D-erythritol 4-phosphate cytidylyltransferase from Bacillus mycoides (strain KBAB4) (Bacillus weihenstephanensis).